We begin with the raw amino-acid sequence, 336 residues long: Ribosomal RNA large subunit methyltransferase F (336 aa).

The segment at 1–24 (MPRPTSPHPDAERKSASPLHPRNR) is disordered.

The protein belongs to the methyltransferase superfamily. METTL16/RlmF family.

It localises to the cytoplasm. It catalyses the reaction adenosine(1618) in 23S rRNA + S-adenosyl-L-methionine = N(6)-methyladenosine(1618) in 23S rRNA + S-adenosyl-L-homocysteine + H(+). Specifically methylates the adenine in position 1618 of 23S rRNA. The polypeptide is Ribosomal RNA large subunit methyltransferase F (Pseudomonas aeruginosa (strain LESB58)).